A 320-amino-acid chain; its full sequence is Serpentine receptor class delta-28 (320 aa).

The next 7 membrane-spanning stretches (helical) occupy residues 5–25, 38–58, 83–103, 122–142, 176–196, 230–250, and 258–278; these read LLHT…MYLA, AIIT…FFVM, ACYI…IWMI, SLVF…ATWI, LTLI…YAWI, FLPS…TQLI, and LVSV…ILFV.

The protein belongs to the nematode receptor-like protein srd family.

The protein resides in the membrane. This Caenorhabditis elegans protein is Serpentine receptor class delta-28 (srd-28).